Reading from the N-terminus, the 270-residue chain is Phospholysine phosphohistidine inorganic pyrophosphate phosphatase (270 aa).

Mg(2+)-binding residues include Asp19 and Cys21. Residues 19-21, 56-57, and Lys191 each bind substrate; these read DMC and TN. A Mg(2+)-binding site is contributed by Asp216.

Belongs to the HAD-like hydrolase superfamily. Mg(2+) serves as cofactor.

The protein localises to the cytoplasm. Its subcellular location is the nucleus. It carries out the reaction diphosphate + H2O = 2 phosphate + H(+). Functionally, phosphatase that hydrolyzes imidodiphosphate, 3-phosphohistidine and 6-phospholysine. Has broad substrate specificity and can also hydrolyze inorganic diphosphate, but with lower efficiency. In Danio rerio (Zebrafish), this protein is Phospholysine phosphohistidine inorganic pyrophosphate phosphatase (lhpp).